A 242-amino-acid polypeptide reads, in one-letter code: Ribonuclease PH (242 aa).

Phosphate is bound by residues R87 and 125–127 (STR).

This sequence belongs to the RNase PH family. In terms of assembly, homohexameric ring arranged as a trimer of dimers.

The enzyme catalyses tRNA(n+1) + phosphate = tRNA(n) + a ribonucleoside 5'-diphosphate. Phosphorolytic 3'-5' exoribonuclease that plays an important role in tRNA 3'-end maturation. Removes nucleotide residues following the 3'-CCA terminus of tRNAs; can also add nucleotides to the ends of RNA molecules by using nucleoside diphosphates as substrates, but this may not be physiologically important. Probably plays a role in initiation of 16S rRNA degradation (leading to ribosome degradation) during starvation. This is Ribonuclease PH from Synechococcus sp. (strain JA-3-3Ab) (Cyanobacteria bacterium Yellowstone A-Prime).